We begin with the raw amino-acid sequence, 185 residues long: Ribosome-recycling factor (185 aa).

A disordered region spans residues Ala-135–Glu-159.

It belongs to the RRF family.

It localises to the cytoplasm. In terms of biological role, responsible for the release of ribosomes from messenger RNA at the termination of protein biosynthesis. May increase the efficiency of translation by recycling ribosomes from one round of translation to another. The chain is Ribosome-recycling factor from Campylobacter curvus (strain 525.92).